Here is a 618-residue protein sequence, read N- to C-terminus: Dihydroxy-acid dehydratase (618 aa).

A Mg(2+)-binding site is contributed by aspartate 81. Position 122 (cysteine 122) interacts with [2Fe-2S] cluster. Positions 123 and 124 each coordinate Mg(2+). At lysine 124 the chain carries N6-carboxylysine. Residue cysteine 195 coordinates [2Fe-2S] cluster. Residue glutamate 490 coordinates Mg(2+). Serine 516 (proton acceptor) is an active-site residue.

Belongs to the IlvD/Edd family. As to quaternary structure, homodimer. It depends on [2Fe-2S] cluster as a cofactor. Mg(2+) serves as cofactor.

The enzyme catalyses (2R)-2,3-dihydroxy-3-methylbutanoate = 3-methyl-2-oxobutanoate + H2O. It catalyses the reaction (2R,3R)-2,3-dihydroxy-3-methylpentanoate = (S)-3-methyl-2-oxopentanoate + H2O. Its pathway is amino-acid biosynthesis; L-isoleucine biosynthesis; L-isoleucine from 2-oxobutanoate: step 3/4. It participates in amino-acid biosynthesis; L-valine biosynthesis; L-valine from pyruvate: step 3/4. In terms of biological role, functions in the biosynthesis of branched-chain amino acids. Catalyzes the dehydration of (2R,3R)-2,3-dihydroxy-3-methylpentanoate (2,3-dihydroxy-3-methylvalerate) into 2-oxo-3-methylpentanoate (2-oxo-3-methylvalerate) and of (2R)-2,3-dihydroxy-3-methylbutanoate (2,3-dihydroxyisovalerate) into 2-oxo-3-methylbutanoate (2-oxoisovalerate), the penultimate precursor to L-isoleucine and L-valine, respectively. This is Dihydroxy-acid dehydratase from Gluconobacter oxydans (strain 621H) (Gluconobacter suboxydans).